A 410-amino-acid chain; its full sequence is MAAVGAEARGAWCVPCLVSLDTLQELCRKEKLTCKSIGITKRNLNNYEVEYLCDYKVVKDMEYYLVKWKGWPDSTNTWEPLQNLKCPLLLQQFSNDKHNYLSQVKKGKAITPKNNNKTLKPAIAEYIVKKAKQRIALQRWQDELNRRKNHKGMIFVENTVDLEGPPSDFYYINEYKPAPGISLVNEATFGCSCTDCFFQKCCPAEAGVLLAYNKNQQIKIPPGTPIYECNSRCQCGPDCPNRIVQKGTQYSLCIFRTSNGRGWGVKTLVKIKRMSFVMEYVGEVITSEEAERRGQFYDNKGITYLFDLDYESDEFTVDAARYGNVSHFVNHSCDPNLQVFNVFIDNLDTRLPRIALFSTRTINAGEELTFDYQMKGSGDISSDSIDHSPAKKRVRTVCKCGAVTCRGYLN.

Residues 47–105 (YEVEYLCDYKVVKDMEYYLVKWKGWPDSTNTWEPLQNLKCPLLLQQFSNDKHNYLSQVK) form the Chromo domain. The Pre-SET domain occupies 189 to 247 (FGCSCTDCFFQKCCPAEAGVLLAYNKNQQIKIPPGTPIYECNSRCQCGPDCPNRIVQKG). 9 residues coordinate Zn(2+): Cys191, Cys193, Cys196, Cys201, Cys202, Cys229, Cys233, Cys235, and Cys239. Positions 250 to 373 (YSLCIFRTSN…AGEELTFDYQ (124 aa)) constitute an SET domain. Residues 261-263 (RGW), Tyr304, and 330-331 (NH) contribute to the S-adenosyl-L-methionine site. Zn(2+) is bound at residue Cys333. Residues Ser381, Ser384, and Ser388 each carry the phosphoserine modification. In terms of domain architecture, Post-SET spans 394–410 (VRTVCKCGAVTCRGYLN). Positions 398, 400, and 405 each coordinate Zn(2+).

Belongs to the class V-like SAM-binding methyltransferase superfamily. Histone-lysine methyltransferase family. Suvar3-9 subfamily. Interacts with SMAD5. The large PER complex involved in the histone methylation is composed of at least PER2, CBX3, TRIM28, SUV39H1 and/or SUV39H2; CBX3 mediates the formation of the complex. Post-translationally, ubiquitinated by the DCX(DCAF13) E3 ubiquitin ligase complex, leading to its degradation.

Its subcellular location is the nucleus. It is found in the chromosome. It localises to the centromere. It carries out the reaction L-lysyl(9)-[histone H3] + 3 S-adenosyl-L-methionine = N(6),N(6),N(6)-trimethyl-L-lysyl(9)-[histone H3] + 3 S-adenosyl-L-homocysteine + 3 H(+). Its function is as follows. Histone methyltransferase that specifically trimethylates 'Lys-9' of histone H3 using monomethylated H3 'Lys-9' as substrate. H3 'Lys-9' trimethylation represents a specific tag for epigenetic transcriptional repression by recruiting HP1 (CBX1, CBX3 and/or CBX5) proteins to methylated histones. Mainly functions in heterochromatin regions, thereby playing a central role in the establishment of constitutive heterochromatin at pericentric and telomere regions. H3 'Lys-9' trimethylation is also required to direct DNA methylation at pericentric repeats. SUV39H1 is targeted to histone H3 via its interaction with RB1 and is involved in many processes, such as cell cycle regulation, transcriptional repression and regulation of telomere length. May participate in regulation of higher-order chromatin organization during spermatogenesis. Recruited by the large PER complex to the E-box elements of the circadian target genes such as PER2 itself or PER1, contributes to the conversion of local chromatin to a heterochromatin-like repressive state through H3 'Lys-9' trimethylation. This chain is Histone-lysine N-methyltransferase SUV39H2 (SUV39H2), found in Macaca fascicularis (Crab-eating macaque).